The sequence spans 66 residues: MAYIIVHQRDPFPLLGVWIIVIIIVAVIGLLNQSPPERPYQTFKEDNSKIQYITIGGSTTTKVSTS.

Residues 11-31 (PFPLLGVWIIVIIIVAVIGLL) form a helical membrane-spanning segment.

The protein resides in the membrane. This is an uncharacterized protein from Chenopodium amaranticolor (Quinoa).